A 302-amino-acid polypeptide reads, in one-letter code: tRNA dimethylallyltransferase 2 (302 aa).

6–13 provides a ligand contact to ATP; sequence GPTACGKT. Residue 8 to 13 coordinates substrate; sequence TACGKT. Interaction with substrate tRNA regions lie at residues 31 to 34 and 154 to 158; these read DSRQ and QRAIR.

It belongs to the IPP transferase family. As to quaternary structure, monomer. Mg(2+) serves as cofactor.

The enzyme catalyses adenosine(37) in tRNA + dimethylallyl diphosphate = N(6)-dimethylallyladenosine(37) in tRNA + diphosphate. Catalyzes the transfer of a dimethylallyl group onto the adenine at position 37 in tRNAs that read codons beginning with uridine, leading to the formation of N6-(dimethylallyl)adenosine (i(6)A). The polypeptide is tRNA dimethylallyltransferase 2 (Porphyromonas gingivalis (strain ATCC BAA-308 / W83)).